The sequence spans 298 residues: Ethanolamine ammonia-lyase small subunit (298 aa).

Residues Val-210, Glu-231, and Cys-261 each coordinate adenosylcob(III)alamin.

The protein belongs to the EutC family. In terms of assembly, the basic unit is a heterodimer which dimerizes to form tetramers. The heterotetramers trimerize; 6 large subunits form a core ring with 6 small subunits projecting outwards. The cofactor is adenosylcob(III)alamin.

The protein localises to the bacterial microcompartment. The catalysed reaction is ethanolamine = acetaldehyde + NH4(+). It participates in amine and polyamine degradation; ethanolamine degradation. Its function is as follows. Catalyzes the deamination of various vicinal amino-alcohols to oxo compounds. Allows this organism to utilize ethanolamine as the sole source of nitrogen and carbon in the presence of external vitamin B12. The protein is Ethanolamine ammonia-lyase small subunit of Salmonella typhi.